The primary structure comprises 161 residues: 4-hydroxybenzoyl-CoA reductase subunit gamma (161 aa).

The 2Fe-2S ferredoxin-type domain occupies 3–79 (NILRLTLNGR…GKKVETVESL (77 aa)). [2Fe-2S] cluster is bound by residues cysteine 41, cysteine 46, cysteine 49, cysteine 61, cysteine 100, cysteine 103, cysteine 135, and cysteine 137.

In terms of assembly, heterohexamer of two alpha, two beta and two gamma subunits. [2Fe-2S] cluster is required as a cofactor.

The catalysed reaction is oxidized 2[4Fe-4S]-[ferredoxin] + benzoyl-CoA + H2O = 4-hydroxybenzoyl-CoA + reduced 2[4Fe-4S]-[ferredoxin] + 2 H(+). Inactivated by low concentrations of cyanide in vitro. Its function is as follows. Component of a complex that catalyzes the reductive dehydroxylation of 4-hydroxybenzoyl-CoA to benzoyl-CoA. Reaction is not reversible. Is a key enzyme in the anaerobic degradation of phenolic compounds. This Thauera aromatica protein is 4-hydroxybenzoyl-CoA reductase subunit gamma (hcrC).